The following is a 55-amino-acid chain: MKRQKRDRLERAHQRGYQAGIAGRSKEMCPYQTLNQRSQWLGGWREAMADRVVMA.

This sequence belongs to the ribosome modulation factor family. As to quaternary structure, associates exclusively with 100S ribosomes.

The protein localises to the cytoplasm. Functionally, during stationary phase, converts 70S ribosomes to an inactive dimeric form (100S ribosomes). May form immature 90S particles, which are converted to mature 100S ribosomes by the hibernation promoting factor Hpf. The protein is Ribosome modulation factor of Escherichia coli O157:H7.